The following is a 449-amino-acid chain: 23S rRNA (uracil(1939)-C(5))-methyltransferase RlmD (449 aa).

One can recognise a TRAM domain in the interval 15–73; that stretch reads KAIPAKNLTVTVTSLDPFGQGVARHEGKTVFVTGVLPGEQAEVQLTEDKRQFSHAKLKR. [4Fe-4S] cluster-binding residues include cysteine 86, cysteine 92, cysteine 95, and cysteine 173. Residues glutamine 276, phenylalanine 305, asparagine 310, glutamate 326, asparagine 353, and aspartate 374 each coordinate S-adenosyl-L-methionine. Cysteine 400 serves as the catalytic Nucleophile.

The protein belongs to the class I-like SAM-binding methyltransferase superfamily. RNA M5U methyltransferase family. RlmD subfamily.

It carries out the reaction uridine(1939) in 23S rRNA + S-adenosyl-L-methionine = 5-methyluridine(1939) in 23S rRNA + S-adenosyl-L-homocysteine + H(+). Functionally, catalyzes the formation of 5-methyl-uridine at position 1939 (m5U1939) in 23S rRNA. The polypeptide is 23S rRNA (uracil(1939)-C(5))-methyltransferase RlmD (Pectobacterium carotovorum subsp. carotovorum (strain PC1)).